The sequence spans 864 residues: Leucine--tRNA ligase (864 aa).

Positions 42–52 (PYPSGKLHMGH) match the 'HIGH' region motif. Residues 624 to 628 (KMSKS) carry the 'KMSKS' region motif. Residue Lys627 coordinates ATP.

Belongs to the class-I aminoacyl-tRNA synthetase family.

The protein localises to the cytoplasm. The enzyme catalyses tRNA(Leu) + L-leucine + ATP = L-leucyl-tRNA(Leu) + AMP + diphosphate. This Burkholderia ambifaria (strain MC40-6) protein is Leucine--tRNA ligase.